A 76-amino-acid polypeptide reads, in one-letter code: Candidate secreted effector protein MPL124497 (76 aa).

Positions methionine 1–glycine 21 are cleaved as a signal peptide.

This sequence belongs to the CPGH1 family.

It is found in the secreted. Its subcellular location is the host cell. The protein resides in the host cytoplasm. It localises to the host nucleus. In terms of biological role, rust effector delivered into infected tissues to modulate host functions and contribute to pathogen virulence. Enhances leaf colonization by the bacteria Pseudomonas syringae and the oomycete Hyaloperonospora arabidopsidis pathogens in an Arabidopsis thaliana infection model. This chain is Candidate secreted effector protein MPL124497, found in Melampsora larici-populina (strain 98AG31 / pathotype 3-4-7) (Poplar leaf rust fungus).